We begin with the raw amino-acid sequence, 578 residues long: Sulfite reductase [NADPH] hemoprotein beta-component (578 aa).

Residues 1 to 21 (MTNTLAGPDRSRDISQPLEKL) are disordered. [4Fe-4S] cluster is bound by residues Cys443, Cys449, Cys488, and Cys492. Residue Cys492 coordinates siroheme.

The protein belongs to the nitrite and sulfite reductase 4Fe-4S domain family. Alpha(8)-beta(8). The alpha component is a flavoprotein, the beta component is a hemoprotein. Requires siroheme as cofactor. It depends on [4Fe-4S] cluster as a cofactor.

It carries out the reaction hydrogen sulfide + 3 NADP(+) + 3 H2O = sulfite + 3 NADPH + 4 H(+). It participates in sulfur metabolism; hydrogen sulfide biosynthesis; hydrogen sulfide from sulfite (NADPH route): step 1/1. Its function is as follows. Component of the sulfite reductase complex that catalyzes the 6-electron reduction of sulfite to sulfide. This is one of several activities required for the biosynthesis of L-cysteine from sulfate. This Methylocella silvestris (strain DSM 15510 / CIP 108128 / LMG 27833 / NCIMB 13906 / BL2) protein is Sulfite reductase [NADPH] hemoprotein beta-component.